We begin with the raw amino-acid sequence, 418 residues long: Elongation factor 1-gamma 2 (418 aa).

The GST N-terminal domain occupies 1-82 (MALVLHAGSG…YVTRSKADNP (82 aa)). Residues 87–215 (SLIEYAHIEQ…VKQAESVPPV (129 aa)) form the GST C-terminal domain. Residues 210 to 265 (ESVPPVQKKAPPPKEQKPKEAKKEAPKEAPKPKAVEKPEEEEEAPKPKPKNPLDLL) are disordered. Basic and acidic residues predominate over residues 221-246 (PPKEQKPKEAKKEAPKEAPKPKAVEK). In terms of domain architecture, EF-1-gamma C-terminal spans 258–418 (PKNPLDLLPP…ESLLDAKCFK (161 aa)).

In terms of assembly, EF-1 is composed of four subunits: alpha, beta, delta, and gamma.

Probably plays a role in anchoring the complex to other cellular components. The sequence is that of Elongation factor 1-gamma 2 from Oryza sativa subsp. japonica (Rice).